Consider the following 603-residue polypeptide: Keratin, type II cuticular Hb4 (603 aa).

A head region spans residues 1–173 (MSCRSYRVSS…PNAQRVKRDE (173 aa)). The IF rod domain maps to 173–484 (EKEQIKTLNN…RLLEGEEIRI (312 aa)). A coil 1A region spans residues 174 to 208 (KEQIKTLNNKFASFIDKVRFLEQQNKLLETKWSFL). Residues 209–218 (QEQKCARSNL) are linker 1. Positions 219 to 319 (EPLFDNYITN…YHEEIEMLQS (101 aa)) are coil 1B. Residues 320 to 336 (HISETSVIVKMDNSRDL) are linker 12. Residues 337 to 480 (NLDGIIAEVK…VTYRRLLEGE (144 aa)) form a coil 2 region. Residues 481-603 (EIRICEGVGP…STTTSRRTRY (123 aa)) are tail. The tract at residues 579 to 603 (CSGGRGNRSSSVRFSSTTTSRRTRY) is disordered.

It belongs to the intermediate filament family. In terms of assembly, heterotetramer of two type I and two type II keratins. In skin, only expressed in the suprabasal cells of tail scale epidermis. Suprabasally expressed in stratified squamous epithelia and also in the posterior unit of the complex filiform papillae of tongue. Expressed in rare anatomical sites in which an orthokeratinized stratum corneum would be too soft and a hard keratinized structure would be too rigid to meet the functional requirement of the respective epithelia.

The polypeptide is Keratin, type II cuticular Hb4 (Krt84) (Mus musculus (Mouse)).